A 42-amino-acid polypeptide reads, in one-letter code: Photosystem I reaction center subunit IX (42 aa).

The chain crosses the membrane as a helical span at residues 8–28 (YLSTAPVLFTVWLSFTASFII).

The protein belongs to the PsaJ family.

It localises to the plastid. The protein resides in the chloroplast thylakoid membrane. Its function is as follows. May help in the organization of the PsaE and PsaF subunits. The chain is Photosystem I reaction center subunit IX from Rhodomonas salina (Cryptomonas salina).